The sequence spans 874 residues: Alanine--tRNA ligase (874 aa).

Zn(2+)-binding residues include His-564, His-568, Cys-665, and His-669.

The protein belongs to the class-II aminoacyl-tRNA synthetase family. It depends on Zn(2+) as a cofactor.

The protein resides in the cytoplasm. It catalyses the reaction tRNA(Ala) + L-alanine + ATP = L-alanyl-tRNA(Ala) + AMP + diphosphate. In terms of biological role, catalyzes the attachment of alanine to tRNA(Ala) in a two-step reaction: alanine is first activated by ATP to form Ala-AMP and then transferred to the acceptor end of tRNA(Ala). Also edits incorrectly charged Ser-tRNA(Ala) and Gly-tRNA(Ala) via its editing domain. This Burkholderia thailandensis (strain ATCC 700388 / DSM 13276 / CCUG 48851 / CIP 106301 / E264) protein is Alanine--tRNA ligase.